We begin with the raw amino-acid sequence, 219 residues long: Melanoma-associated antigen H1 (219 aa).

Residues 1-13 (MPRGRKSRRRRNA) are compositionally biased toward basic residues. The disordered stretch occupies residues 1–84 (MPRGRKSRRR…QKPSVPRSNF (84 aa)). The 198-residue stretch at 1–198 (MPRGRKSRRR…KDWPCNYDWD (198 aa)) folds into the MAGE domain. A compositionally biased stretch (acidic residues) spans 44–57 (PEDDLSGPEEDPST). Positions 58 to 74 (PEEASTTPEEASSTAQA) are enriched in low complexity. Tyrosine 195 is subject to Phosphotyrosine.

The sequence is that of Melanoma-associated antigen H1 (MAGEH1) from Homo sapiens (Human).